The sequence spans 350 residues: Protein-glutamate methylesterase/protein-glutamine glutaminase 2 (350 aa).

The 119-residue stretch at 3-121 (RVLLVDDSPV…DPDYEEAVSE (119 aa)) folds into the Response regulatory domain. At D54 the chain carries 4-aspartylphosphate. In terms of domain architecture, CheB-type methylesterase spans 158–322 (IHQDIRVIVI…SFVYGMPGAA (165 aa)). Residues S170, H197, and D290 contribute to the active site.

Belongs to the CheB family. Post-translationally, phosphorylated by CheA. Phosphorylation of the N-terminal regulatory domain activates the methylesterase activity.

It localises to the cytoplasm. It catalyses the reaction [protein]-L-glutamate 5-O-methyl ester + H2O = L-glutamyl-[protein] + methanol + H(+). The catalysed reaction is L-glutaminyl-[protein] + H2O = L-glutamyl-[protein] + NH4(+). In terms of biological role, involved in chemotaxis. Part of a chemotaxis signal transduction system that modulates chemotaxis in response to various stimuli. Catalyzes the demethylation of specific methylglutamate residues introduced into the chemoreceptors (methyl-accepting chemotaxis proteins or MCP) by CheR. Also mediates the irreversible deamidation of specific glutamine residues to glutamic acid. The polypeptide is Protein-glutamate methylesterase/protein-glutamine glutaminase 2 (Methanospirillum hungatei JF-1 (strain ATCC 27890 / DSM 864 / NBRC 100397 / JF-1)).